Consider the following 539-residue polypeptide: Putative serine/threonine-protein kinase L670 (539 aa).

Residues 1–115 form the Cyclin N-terminal domain; that stretch reads MSLFNNHPEL…ILKVFKFGLH (115 aa). Positions 258–519 constitute a Protein kinase domain; sequence MNVIEKLGIG…VLKIFSECFV (262 aa). ATP-binding positions include 264-272 and Lys-285; that span reads LGIGSFGLV. The active-site Proton acceptor is the Asp-375.

It belongs to the protein kinase superfamily. Ser/Thr protein kinase family.

The catalysed reaction is L-seryl-[protein] + ATP = O-phospho-L-seryl-[protein] + ADP + H(+). It catalyses the reaction L-threonyl-[protein] + ATP = O-phospho-L-threonyl-[protein] + ADP + H(+). This Acanthamoeba polyphaga mimivirus (APMV) protein is Putative serine/threonine-protein kinase L670.